The sequence spans 341 residues: Phosphoribosylformylglycinamidine cyclo-ligase (341 aa).

The protein belongs to the AIR synthase family.

Its subcellular location is the cytoplasm. The enzyme catalyses 2-formamido-N(1)-(5-O-phospho-beta-D-ribosyl)acetamidine + ATP = 5-amino-1-(5-phospho-beta-D-ribosyl)imidazole + ADP + phosphate + H(+). The protein operates within purine metabolism; IMP biosynthesis via de novo pathway; 5-amino-1-(5-phospho-D-ribosyl)imidazole from N(2)-formyl-N(1)-(5-phospho-D-ribosyl)glycinamide: step 2/2. This is Phosphoribosylformylglycinamidine cyclo-ligase from Synechococcus elongatus (strain ATCC 33912 / PCC 7942 / FACHB-805) (Anacystis nidulans R2).